The primary structure comprises 105 residues: Flagellar transcriptional regulator FlhD (105 aa).

Belongs to the FlhD family. As to quaternary structure, homodimer; disulfide-linked. Forms a heterohexamer composed of two FlhC and four FlhD subunits. Each FlhC binds a FlhD dimer, forming a heterotrimer, and a hexamer assembles by dimerization of two heterotrimers.

It localises to the cytoplasm. Its function is as follows. Functions in complex with FlhC as a master transcriptional regulator that regulates transcription of several flagellar and non-flagellar operons by binding to their promoter region. Activates expression of class 2 flagellar genes, including fliA, which is a flagellum-specific sigma factor that turns on the class 3 genes. Also regulates genes whose products function in a variety of physiological pathways. In Cupriavidus necator (strain ATCC 17699 / DSM 428 / KCTC 22496 / NCIMB 10442 / H16 / Stanier 337) (Ralstonia eutropha), this protein is Flagellar transcriptional regulator FlhD.